Consider the following 116-residue polypeptide: Protein Rev (116 aa).

Serine 5 and serine 8 each carry phosphoserine; by host CK2. A homomultimerization region spans residues cysteine 18–asparagine 26. The segment at proline 27–alanine 47 is disordered. The Nuclear localization signal and RNA-binding (RRE) motif lies at threonine 34–arginine 50. The segment covering glutamine 36–alanine 47 has biased composition (basic residues). The short motif at leucine 73–asparagine 84 is the Nuclear export signal and binding to XPO1 element. The tract at residues glutamate 87–glutamate 116 is disordered. The residue at position 99 (serine 99) is a Phosphoserine; by host.

The protein belongs to the HIV-1 REV protein family. Homomultimer; when bound to the RRE. Multimeric assembly is essential for activity and may involve XPO1. Binds to human KPNB1, XPO1, TNPO1, RANBP5 and IPO7. Interacts with the viral Integrase. Interacts with human KHDRBS1. Interacts with human NAP1; this interaction decreases Rev multimerization and stimulates its activity. Interacts with human DEAD-box helicases DDX3 and DDX24; these interactions may serve for viral RNA export to the cytoplasm and packaging, respectively. Interacts with human PSIP1; this interaction may inhibit HIV-1 DNA integration by promoting dissociation of the Integrase-LEDGF/p75 complex. In terms of processing, asymmetrically arginine dimethylated at one site by host PRMT6. Methylation impairs the RNA-binding activity and export of viral RNA from the nucleus to the cytoplasm. Post-translationally, phosphorylated by protein kinase CK2. Presence of, and maybe binding to the N-terminus of the regulatory beta subunit of CK2 is necessary for CK2-mediated Rev's phosphorylation.

The protein resides in the host nucleus. Its subcellular location is the host nucleolus. It localises to the host cytoplasm. Escorts unspliced or incompletely spliced viral pre-mRNAs (late transcripts) out of the nucleus of infected cells. These pre-mRNAs carry a recognition sequence called Rev responsive element (RRE) located in the env gene, that is not present in fully spliced viral mRNAs (early transcripts). This function is essential since most viral proteins are translated from unspliced or partially spliced pre-mRNAs which cannot exit the nucleus by the pathway used by fully processed cellular mRNAs. Rev itself is translated from a fully spliced mRNA that readily exits the nucleus. Rev's nuclear localization signal (NLS) binds directly to KPNB1/Importin beta-1 without previous binding to KPNA1/Importin alpha-1. KPNB1 binds to the GDP bound form of RAN (Ran-GDP) and targets Rev to the nucleus. In the nucleus, the conversion from Ran-GDP to Ran-GTP dissociates Rev from KPNB1 and allows Rev's binding to the RRE in viral pre-mRNAs. Rev multimerization on the RRE via cooperative assembly exposes its nuclear export signal (NES) to the surface. Rev can then form a complex with XPO1/CRM1 and Ran-GTP, leading to nuclear export of the complex. Conversion from Ran-GTP to Ran-GDP mediates dissociation of the Rev/RRE/XPO1/RAN complex, so that Rev can return to the nucleus for a subsequent round of export. Beside KPNB1, also seems to interact with TNPO1/Transportin-1, RANBP5/IPO5 and IPO7/RANBP7 for nuclear import. The nucleoporin-like HRB/RIP is an essential cofactor that probably indirectly interacts with Rev to release HIV RNAs from the perinuclear region to the cytoplasm. This is Protein Rev from Human immunodeficiency virus type 1 group M subtype F1 (isolate VI850) (HIV-1).